Here is a 237-residue protein sequence, read N- to C-terminus: Demethylmenaquinone methyltransferase (237 aa).

S-adenosyl-L-methionine is bound by residues Thr-58, Asp-79, and 106 to 107 (NA).

The protein belongs to the class I-like SAM-binding methyltransferase superfamily. MenG/UbiE family.

The enzyme catalyses a 2-demethylmenaquinol + S-adenosyl-L-methionine = a menaquinol + S-adenosyl-L-homocysteine + H(+). The protein operates within quinol/quinone metabolism; menaquinone biosynthesis; menaquinol from 1,4-dihydroxy-2-naphthoate: step 2/2. Methyltransferase required for the conversion of demethylmenaquinol (DMKH2) to menaquinol (MKH2). The sequence is that of Demethylmenaquinone methyltransferase from Bacillus cytotoxicus (strain DSM 22905 / CIP 110041 / 391-98 / NVH 391-98).